A 55-amino-acid chain; its full sequence is Large ribosomal subunit protein bL32c (55 aa).

A disordered region spans residues 1-24; sequence MAVPKKRTSKSKKNARKANWKRKG.

It belongs to the bacterial ribosomal protein bL32 family.

It is found in the plastid. The protein resides in the chloroplast. In Phaeodactylum tricornutum (strain CCAP 1055/1), this protein is Large ribosomal subunit protein bL32c.